The following is a 1583-amino-acid chain: Spike glycoprotein (1583 aa).

Residues 1 to 20 form the signal peptide; that stretch reads MFLCFCTAPILCLWINSGGA. Topologically, residues 21–1553 are virion surface; the sequence is VVVSNESLVV…YGLIPAWITW (1533 aa). Residues N25, N82, N252, N384, N494, N573, N842, N936, N970, N1268, N1299, N1387, N1391, N1430, N1433, N1440, N1485, N1489, N1497, and N1517 are each glycosylated (N-linked (GlcNAc...) asparagine; by host). A helical membrane pass occupies residues 1554–1574; sequence LTLGFSLFSILISGVNIILFF. Residues 1575–1583 are Intravirion-facing; sequence EMNGKVKKS.

This sequence belongs to the torovirinae spike protein family. As to quaternary structure, homotrimer.

The protein resides in the virion membrane. In terms of biological role, mediates the binding of virions to the host cell receptor and is involved in membrane fusion. The sequence is that of Spike glycoprotein (S) from Breda virus 1 (BRV-1).